Reading from the N-terminus, the 352-residue chain is Probable cytosolic iron-sulfur protein assembly protein CIAO1 homolog (352 aa).

WD repeat units follow at residues 14–53 (GHDDRVWNVAWSPQGDMLASCSGDKTVRIWSRRQPRPSEQ), 63–102 (CHTRTIRSVAWSPTGRALATASFDATVAVWELSSGVWEQV), 107–146 (GHENEVKCVAWNPDGRLIATCGRDRSVWIWESMPGREFEC), 152–191 (GHSQDVKAVTWHPSGELLVSAGYDDTIKLWTYDGDEWGCA), 200–240 (GHES…TSTP), 268–306 (HHRRTVFSLDWAPTGLIATGDGDDSILAEEEASGLLTQP), and 319–352 (AHGADVNCVRWNPAEPRLLASCSDDGLIRLWWLR).

Belongs to the WD repeat CIA1 family.

Essential component of the cytosolic iron-sulfur (Fe/S) protein assembly machinery. Required for the maturation of extramitochondrial Fe/S proteins. The protein is Probable cytosolic iron-sulfur protein assembly protein CIAO1 homolog of Chlamydomonas reinhardtii (Chlamydomonas smithii).